A 395-amino-acid polypeptide reads, in one-letter code: Transcriptional coactivator yorkie (395 aa).

Residues 73 to 100 form a disordered region; it reads NSFFTPPAPSHSRANSADSTYDAGSQSS. Phosphoserine occurs at positions 82, 88, 100, 117, and 145. A compositionally biased stretch (polar residues) spans 84-100; sequence SRANSADSTYDAGSQSS. 2 disordered regions span residues 129–150 and 162–199; these read PSPQ…PASL and AAAA…PASS. Serine 146 is modified (phosphoserine; by CDK7). Residue serine 149 is modified to Phosphoserine. A compositionally biased stretch (low complexity) spans 162–179; it reads AAAANNPNANPSSQQQPA. Phosphoserine is present on serine 227. At tyrosine 228 the chain carries Phosphotyrosine. Phosphoserine is present on serine 232. WW domains lie at 241 to 274 and 310 to 343; these read GALP…DPRI and GPLP…DPRM.

This sequence belongs to the YAP1 family. Interacts (via WW domains) with wts. Interacts (via N-terminus) with sd (via C-terminus) and this interaction enhances the transcriptional activity of sd. The phosphorylated form interacts with 14-3-3epsilon and 14-3-3zeta. Interacts with Ack and ex. Post-translationally, its activity is regulated by multiple phosphorylation events. Phosphorylation at Ser-88, Ser-145 and Ser-227 negatively regulate its activity and restrict its nuclear localization. Wts-mediated phosphorylation at Ser-145 promotes interaction with 14-3-3epsilon and 14-3-3zeta. Phosphorylation at Ser-88 and Ser-227 regulate nuclear localization and activity independent of 14-3-3 association. Phosphorylation at Ser-146 by Cdk7 promotes its stability by preventing ubiquitination by the DCX(DCAF12) complex. In terms of processing, ubiquitinated by the DCX(DCAF12) complex, leading to its degradation. Phosphorylation at Ser-146 by Cdk7 prevents ubiquitination by the DCX(DCAF12) complex.

Its subcellular location is the cytoplasm. The protein localises to the nucleus. Transcriptional coactivator which is the critical downstream regulatory target in the Hippo/SWH (Sav/Wts/Hpo) signaling pathway that plays a pivotal role in organ size control and tumor suppression by restricting proliferation and promoting apoptosis. The core of this pathway is composed of a kinase cascade wherein Hippo (Hpo), in complex with its regulatory protein Salvador (Sav), phosphorylates and activates Warts (Wts) in complex with its regulatory protein Mats, which in turn phosphorylates and inactivates the Yorkie (Yki) oncoprotein. The Hippo/SWH signaling pathway inhibits the activity of the transcriptional complex formed by Scalloped (sd) and Yki and the target genes of this pathway include cyclin-E (cycE), diap1 and bantam. Regulates the expression of G1/S-specific CycE and diap1, thereby promoting cell proliferation and inhibiting apoptosis. Required for transcriptional activity of sd in wing imaginal disks. Induces expression of expression of vestigial (vg) in wing and haltere disks and the expression of transcription factor E2f (E2f). This is Transcriptional coactivator yorkie (yki) from Drosophila melanogaster (Fruit fly).